The following is a 77-amino-acid chain: Acyl carrier protein (77 aa).

The Carrier domain maps to 2–77 (SEKLQKIQAL…DAVAYIEERS (76 aa)). An O-(pantetheine 4'-phosphoryl)serine modification is found at Ser37.

This sequence belongs to the acyl carrier protein (ACP) family. In terms of processing, 4'-phosphopantetheine is transferred from CoA to a specific serine of apo-ACP by AcpS. This modification is essential for activity because fatty acids are bound in thioester linkage to the sulfhydryl of the prosthetic group.

The protein localises to the cytoplasm. It functions in the pathway lipid metabolism; fatty acid biosynthesis. Carrier of the growing fatty acid chain in fatty acid biosynthesis. In Desulforudis audaxviator (strain MP104C), this protein is Acyl carrier protein.